Reading from the N-terminus, the 200-residue chain is Pyridoxal 5'-phosphate synthase subunit PdxT (200 aa).

52–54 (GES) lines the L-glutamine pocket. Residue Cys-84 is the Nucleophile of the active site. Residues Arg-116 and 145–146 (IR) contribute to the L-glutamine site. Residues His-181 and Glu-183 each act as charge relay system in the active site.

Belongs to the glutaminase PdxT/SNO family. As to quaternary structure, in the presence of PdxS, forms a dodecamer of heterodimers. Only shows activity in the heterodimer.

It carries out the reaction aldehydo-D-ribose 5-phosphate + D-glyceraldehyde 3-phosphate + L-glutamine = pyridoxal 5'-phosphate + L-glutamate + phosphate + 3 H2O + H(+). The enzyme catalyses L-glutamine + H2O = L-glutamate + NH4(+). The protein operates within cofactor biosynthesis; pyridoxal 5'-phosphate biosynthesis. In terms of biological role, catalyzes the hydrolysis of glutamine to glutamate and ammonia as part of the biosynthesis of pyridoxal 5'-phosphate. The resulting ammonia molecule is channeled to the active site of PdxS. The sequence is that of Pyridoxal 5'-phosphate synthase subunit PdxT from Saccharolobus solfataricus (strain ATCC 35092 / DSM 1617 / JCM 11322 / P2) (Sulfolobus solfataricus).